The chain runs to 1388 residues: Collagen alpha-1(XV) chain (1388 aa).

An N-terminal signal peptide occupies residues 1 to 27 (MAPRRNNGQCWCLLMLLSVSTPLPAVT). A Laminin G-like domain is found at 66 to 249 (AYSFGPGANV…SSASGETSGL (184 aa)). The disordered stretch occupies residues 223–250 (TVHPDPRTPEELCDPEESSASGETSGLQ). The nonhelical region 1 (NC1) stretch occupies residues 229 to 555 (RTPEELCDPE…WITPAQREHV (327 aa)). Over residues 240 to 249 (SSASGETSGL) the composition is skewed to polar residues. O-linked (Xyl...) (chondroitin sulfate) serine glycans are attached at residues S243 and S247. The O-linked (GalNAc...) threonine glycan is linked to T265. Residues 266 to 301 (QASPKEAKVEPINTPPTPSSPFEDMELSGEPVPEGT) form a disordered region. 2 N-linked (GlcNAc...) asparagine glycosylation sites follow: N306 and N324. Residue S343 is glycosylated (O-linked (Xyl...) (chondroitin sulfate) serine). Tandem repeats lie at residues 358–408 (AATA…EERL), 409–459 (AATA…EDSL), 460–509 (TTAA…EEDL), and 510–555 (AAAT…REHV). A 4 X tandem repeats region spans residues 358-555 (AATAAGLAEV…WITPAQREHV (198 aa)). Residues 371-795 (TAGEAEASSV…VGPPGPRGPP (425 aa)) form a disordered region. The span at 379 to 392 (SVPTGGPTLSMSTE) shows a compositional bias: polar residues. Low complexity predominate over residues 409–420 (AATAAGEAEALA). A compositionally biased stretch (polar residues) spans 452-472 (GPSSEDSLTTAAAATEVSLST). The span at 510–527 (AAATTEEPLITAGGEESG) shows a compositional bias: low complexity. Over residues 528–540 (SPPPDGPPLPLPT) the composition is skewed to pro residues. Positions 556–573 (GMKGQAGPKGEKGDAGEE) are triple-helical region 1 (COL1). A nonhelical region 2 (NC2) region spans residues 574–618 (LPGPPEPSGPVGPTAGAEAEGSGLGWGSDVGSGSGDLVGSEQLLR). Residues 595-609 (SGLGWGSDVGSGSGD) are compositionally biased toward gly residues. Collagen-like domains follow at residues 619–680 (GPPG…MKGE) and 681–731 (KGAR…PPGP). Positions 619-732 (GPPGPPGPPG…PGPPGPPGPG (114 aa)) are triple-helical region 2 (COL2). Pro residues predominate over residues 620–630 (PPGPPGPPGLP). A glycan (N-linked (GlcNAc...) asparagine) is linked at N687. The span at 716-731 (VMGPPGPPGPPGPPGP) shows a compositional bias: pro residues. Positions 733–763 (CTMGLGFEDTEGSGSTQLLNEPKLSRPTAAI) are nonhelical region 3 (NC3). The O-linked (Xyl...) (chondroitin sulfate) serine glycan is linked to S745. The tract at residues 764-798 (GLKGEKGDRGPKGERGMDGASIVGPPGPRGPPGHI) is triple-helical region 3 (COL3). The span at 766–780 (KGEKGDRGPKGERGM) shows a compositional bias: basic and acidic residues. Residues 799–822 (KVLSNSLINITHGFMNFSDIPELV) form a nonhelical region 4 (NC4) region. N-linked (GlcNAc...) asparagine glycans are attached at residues N807 and N814. The Collagen-like 3 domain maps to 823–865 (GPPGPDGLPGLPGFPGPRGPKGDTGLPGFPGLKGEQGEKGEPG). The interval 823-867 (GPPGPDGLPGLPGFPGPRGPKGDTGLPGFPGLKGEQGEKGEPGAI) is triple-helical region 4 (COL4). The span at 827–840 (PDGLPGLPGFPGPR) shows a compositional bias: pro residues. The interval 827-864 (PDGLPGLPGFPGPRGPKGDTGLPGFPGLKGEQGEKGEP) is disordered. The segment at 868 to 878 (LTEDIPLERLM) is nonhelical region 5 (NC5). Residues 879-927 (GKKGEPGMHGAPGPMGPKGPPGHKGEFGLPGRPGRPGLNGLKGTKGDPG) form the Collagen-like 4 domain. The interval 879–949 (GKKGEPGMHG…PGPPGPPGAV (71 aa)) is triple-helical region 5 (COL5). The nonhelical region 6 (NC6) stretch occupies residues 950–983 (INIKGAIFPIPVRPHCKMPVDTAHPGSPELITFH). The tract at residues 984–1013 (GVKGEKGSWGLPGSKGEKGDQGAQGPPGPP) is triple-helical region 6 (COL6). Disordered regions lie at residues 988–1016 (EKGS…PLDL) and 1029–1133 (ENGD…GSRN). The nonhelical region 7 (NC7) stretch occupies residues 1014–1027 (LDLAYLRHFLNNLK). A triple-helical region 7 (COL7) region spans residues 1028-1045 (GENGDKGFKGEKGEKGDI). Basic and acidic residues predominate over residues 1029–1044 (ENGDKGFKGEKGEKGD). N-linked (GlcNAc...) asparagine glycosylation occurs at N1046. The interval 1046–1052 (NGSFLMS) is nonhelical region 8 (NC8). Positions 1053–1107 (GPPGLPGNPGPAGQKGETVVGPQGPPGAPGLPGPPGFGRPGDPGPPGPPGPPGPP) are triple-helical region 8 (COL8). 2 stretches are compositionally biased toward pro residues: residues 1075 to 1107 (QGPP…PGPP) and 1117 to 1126 (PGPPGPPGQP). A nonhelical region 9 (NC9) region spans residues 1108-1117 (AILGAAVALP). Residues 1118-1132 (GPPGPPGQPGLPGSR) are triple-helical region 9 (COL9). A nonhelical region 10 (NC10) region spans residues 1133 to 1388 (NLVTAFSNMD…ENSFMTDARK (256 aa)). 2 cysteine pairs are disulfide-bonded: C1237-C1377 and C1339-C1369.

It belongs to the multiplexin collagen family. In terms of assembly, trimer; disulfide-linked. As to quaternary structure, interacts moderately with EFEMP2. Post-translationally, prolines at the third position of the tripeptide repeating unit (G-X-Y) are hydroxylated in some or all of the chains. O-glycosylated; with core 1 or possibly core 8 glycans. Contains chondroitin sulfate. As to expression, detected in fibroblasts and urine (at protein level). Detected in placenta (at protein level). Expressed predominantly in internal organs such as adrenal gland, pancreas and kidney.

Its subcellular location is the secreted. It localises to the extracellular space. The protein localises to the extracellular matrix. Functionally, structural protein that stabilizes microvessels and muscle cells, both in heart and in skeletal muscle. In terms of biological role, restin potently inhibits angiogenesis. The sequence is that of Collagen alpha-1(XV) chain (COL15A1) from Homo sapiens (Human).